The sequence spans 398 residues: Probable aminomethyltransferase (398 aa).

The protein belongs to the GcvT family. In terms of assembly, the glycine cleavage system is composed of four proteins: P, T, L and H.

The enzyme catalyses N(6)-[(R)-S(8)-aminomethyldihydrolipoyl]-L-lysyl-[protein] + (6S)-5,6,7,8-tetrahydrofolate = N(6)-[(R)-dihydrolipoyl]-L-lysyl-[protein] + (6R)-5,10-methylene-5,6,7,8-tetrahydrofolate + NH4(+). The glycine cleavage system catalyzes the degradation of glycine. The chain is Probable aminomethyltransferase from Thermococcus kodakarensis (strain ATCC BAA-918 / JCM 12380 / KOD1) (Pyrococcus kodakaraensis (strain KOD1)).